Reading from the N-terminus, the 152-residue chain is Proline-rich acidic protein 1 (152 aa).

The N-terminal stretch at 1 to 20 (MKRFLLATCLVAVLLWEAGA) is a signal peptide.

Interacts with MTTP. Interacts with MAD1L1. Highly expressed in the small intestine where it shows a proximal-distal graded expression.

It localises to the secreted. It is found in the endoplasmic reticulum. Its function is as follows. Lipid-binding protein which promotes lipid absorption by facilitating MTTP-mediated lipid transfer (mainly triglycerides and phospholipids) and MTTP-mediated apoB lipoprotein assembly and secretion. Protects the gastrointestinal epithelium from irradiation-induced apoptosis. May play an important role in maintaining normal growth homeostasis in epithelial cells. Involved in p53/TP53-dependent cell survival after DNA damage. The chain is Proline-rich acidic protein 1 (Prap1) from Rattus norvegicus (Rat).